Here is a 118-residue protein sequence, read N- to C-terminus: Small ribosomal subunit protein uS11 (118 aa).

The protein belongs to the universal ribosomal protein uS11 family. Part of the 30S ribosomal subunit. Interacts with proteins S7 and S18. Binds to IF-3.

Its function is as follows. Located on the platform of the 30S subunit, it bridges several disparate RNA helices of the 16S rRNA. Forms part of the Shine-Dalgarno cleft in the 70S ribosome. The chain is Small ribosomal subunit protein uS11 from Carsonella ruddii (strain PV).